Here is a 348-residue protein sequence, read N- to C-terminus: tRNA pseudouridine synthase D (348 aa).

Phe27 contributes to the substrate binding site. Asp80 (nucleophile) is an active-site residue. Asn129 lines the substrate pocket. The 149-residue stretch at 155-303 (GVPNYFGSQR…VEPARRAVLL (149 aa)) folds into the TRUD domain. Residue Phe329 participates in substrate binding.

It belongs to the pseudouridine synthase TruD family.

It catalyses the reaction uridine(13) in tRNA = pseudouridine(13) in tRNA. Functionally, responsible for synthesis of pseudouridine from uracil-13 in transfer RNAs. In Pectobacterium atrosepticum (strain SCRI 1043 / ATCC BAA-672) (Erwinia carotovora subsp. atroseptica), this protein is tRNA pseudouridine synthase D.